The primary structure comprises 67 residues: Protein AaeX (67 aa).

The next 2 membrane-spanning stretches (helical) occupy residues leucine 3–leucine 23 and phenylalanine 43–serine 63.

Belongs to the AaeX family.

Its subcellular location is the cell membrane. The polypeptide is Protein AaeX (Salmonella gallinarum (strain 287/91 / NCTC 13346)).